A 279-amino-acid polypeptide reads, in one-letter code: Ribonuclease Z (279 aa).

Zn(2+) contacts are provided by H61, H63, D65, H66, H153, D176, and H240. The active-site Proton acceptor is the D65.

It belongs to the RNase Z family. In terms of assembly, homodimer. Requires Zn(2+) as cofactor.

It carries out the reaction Endonucleolytic cleavage of RNA, removing extra 3' nucleotides from tRNA precursor, generating 3' termini of tRNAs. A 3'-hydroxy group is left at the tRNA terminus and a 5'-phosphoryl group is left at the trailer molecule.. In terms of biological role, zinc phosphodiesterase, which displays some tRNA 3'-processing endonuclease activity. Probably involved in tRNA maturation, by removing a 3'-trailer from precursor tRNA. The protein is Ribonuclease Z of Mycobacterium marinum (strain ATCC BAA-535 / M).